The sequence spans 833 residues: Multiple RNA-binding domain-containing protein 1 (833 aa).

One can recognise an RRM 1 domain in the interval S2 to D83. The tract at residues E160–E251 is disordered. Composition is skewed to basic and acidic residues over residues A188–T205 and D213–L222. 4 consecutive RRM domains span residues K323–A401, N506–R578, A619–Q702, and T721–N798.

It belongs to the RRM MRD1 family.

The protein localises to the nucleus. Functionally, involved in pre-rRNA processing. This is Multiple RNA-binding domain-containing protein 1 (mrd1) from Schizosaccharomyces pombe (strain 972 / ATCC 24843) (Fission yeast).